The chain runs to 118 residues: Large ribosomal subunit protein bL20 (118 aa).

It belongs to the bacterial ribosomal protein bL20 family.

Its function is as follows. Binds directly to 23S ribosomal RNA and is necessary for the in vitro assembly process of the 50S ribosomal subunit. It is not involved in the protein synthesizing functions of that subunit. This Edwardsiella ictaluri (strain 93-146) protein is Large ribosomal subunit protein bL20.